The primary structure comprises 158 residues: Putative 4-hydroxy-4-methyl-2-oxoglutarate aldolase (158 aa).

Residues 75-78 (GDLI) and Arg97 contribute to the substrate site. Residue Asp98 coordinates a divalent metal cation.

The protein belongs to the class II aldolase/RraA-like family. As to quaternary structure, homotrimer. The cofactor is a divalent metal cation.

The catalysed reaction is 4-hydroxy-4-methyl-2-oxoglutarate = 2 pyruvate. The enzyme catalyses oxaloacetate + H(+) = pyruvate + CO2. Catalyzes the aldol cleavage of 4-hydroxy-4-methyl-2-oxoglutarate (HMG) into 2 molecules of pyruvate. Also contains a secondary oxaloacetate (OAA) decarboxylase activity due to the common pyruvate enolate transition state formed following C-C bond cleavage in the retro-aldol and decarboxylation reactions. The sequence is that of Putative 4-hydroxy-4-methyl-2-oxoglutarate aldolase from Saccharopolyspora erythraea (strain ATCC 11635 / DSM 40517 / JCM 4748 / NBRC 13426 / NCIMB 8594 / NRRL 2338).